We begin with the raw amino-acid sequence, 254 residues long: Adenosylcobinamide-GDP ribazoletransferase (254 aa).

The next 7 membrane-spanning stretches (helical) occupy residues 27–47 (SSLY…VLLA), 50–70 (GMGV…GLIL), 104–124 (VGSF…ICLL), 131–151 (AYGM…LLAA), 170–190 (AGWP…FVLL), 194–214 (LAPS…VGWL), and 233–253 (LVEA…FWAI).

Belongs to the CobS family. The cofactor is Mg(2+).

The protein resides in the cell inner membrane. It carries out the reaction alpha-ribazole + adenosylcob(III)inamide-GDP = adenosylcob(III)alamin + GMP + H(+). The catalysed reaction is alpha-ribazole 5'-phosphate + adenosylcob(III)inamide-GDP = adenosylcob(III)alamin 5'-phosphate + GMP + H(+). The protein operates within cofactor biosynthesis; adenosylcobalamin biosynthesis; adenosylcobalamin from cob(II)yrinate a,c-diamide: step 7/7. Joins adenosylcobinamide-GDP and alpha-ribazole to generate adenosylcobalamin (Ado-cobalamin). Also synthesizes adenosylcobalamin 5'-phosphate from adenosylcobinamide-GDP and alpha-ribazole 5'-phosphate. The chain is Adenosylcobinamide-GDP ribazoletransferase from Chlorobaculum tepidum (strain ATCC 49652 / DSM 12025 / NBRC 103806 / TLS) (Chlorobium tepidum).